The chain runs to 230 residues: Probable tetraspanin tspD (230 aa).

Residues Met1–Asn20 are Cytoplasmic-facing. Residues Val21–Phe41 traverse the membrane as a helical segment. Over Ser42 to Pro65 the chain is Extracellular. Residues Ala66–Ala86 traverse the membrane as a helical segment. Residues Tyr87–Lys90 are Cytoplasmic-facing. Residues Met91–Ile111 form a helical membrane-spanning segment. Residues Gly112 to Ser200 are Extracellular-facing. Residues Asn133, Asn138, Asn163, and Asn179 are each glycosylated (N-linked (GlcNAc...) asparagine). A helical transmembrane segment spans residues Ala201–Val221. At Arg222–Arg230 the chain is on the cytoplasmic side.

This sequence belongs to the tetraspanin (TM4SF) family.

The protein localises to the membrane. The protein is Probable tetraspanin tspD (tspD) of Dictyostelium discoideum (Social amoeba).